The primary structure comprises 189 residues: Large ribosomal subunit protein uL5 (189 aa).

It belongs to the universal ribosomal protein uL5 family. In terms of assembly, part of the 50S ribosomal subunit; part of the 5S rRNA/L5/L18/L25 subcomplex. Contacts the 5S rRNA and the P site tRNA. Forms a bridge to the 30S subunit in the 70S ribosome.

This is one of the proteins that bind and probably mediate the attachment of the 5S RNA into the large ribosomal subunit, where it forms part of the central protuberance. In the 70S ribosome it contacts protein S13 of the 30S subunit (bridge B1b), connecting the 2 subunits; this bridge is implicated in subunit movement. Contacts the P site tRNA; the 5S rRNA and some of its associated proteins might help stabilize positioning of ribosome-bound tRNAs. This is Large ribosomal subunit protein uL5 from Salinispora tropica (strain ATCC BAA-916 / DSM 44818 / JCM 13857 / NBRC 105044 / CNB-440).